A 389-amino-acid chain; its full sequence is Glutamate 5-kinase (389 aa).

An ATP-binding site is contributed by Lys-17. 3 residues coordinate substrate: Ser-57, Asp-144, and Asn-156. An ATP-binding site is contributed by 176-177; the sequence is SD. Positions 282-359 constitute a PUA domain; it reads AGEIHVDAGA…NEIETILGYV (78 aa).

Belongs to the glutamate 5-kinase family.

Its subcellular location is the cytoplasm. The enzyme catalyses L-glutamate + ATP = L-glutamyl 5-phosphate + ADP. Its pathway is amino-acid biosynthesis; L-proline biosynthesis; L-glutamate 5-semialdehyde from L-glutamate: step 1/2. In terms of biological role, catalyzes the transfer of a phosphate group to glutamate to form L-glutamate 5-phosphate. In Agrobacterium fabrum (strain C58 / ATCC 33970) (Agrobacterium tumefaciens (strain C58)), this protein is Glutamate 5-kinase.